Reading from the N-terminus, the 453-residue chain is uncharacterized protein (453 aa).

It to yeast RIT1.

This is an uncharacterized protein from Schizosaccharomyces pombe (strain 972 / ATCC 24843) (Fission yeast).